Consider the following 410-residue polypeptide: Exopolygalacturonase (410 aa).

An N-terminal signal peptide occupies residues 1 to 22 (MACIDNAMRALFLLALFCVVHG). Residues Asn-89 and Asn-201 are each glycosylated (N-linked (GlcNAc...) asparagine). PbH1 repeat units follow at residues 192–218 (CKDMLIKDVNVTAPGDSPNTDGIHMGD), 219–240 (SSGVTITNTVIGVGDDCISIGP), 242–262 (TSKVNITGVTCGPGHGISIGS), 272–293 (VTDINVKDCTLKKTANGVRIKA), and 337–377 (ASKV…TMDD). Asp-233 acts as the Proton donor in catalysis. An intrachain disulfide couples Cys-235 to Cys-252. N-linked (GlcNAc...) asparagine glycosylation occurs at Asn-246. His-256 is a catalytic residue. Asn-349 carries an N-linked (GlcNAc...) asparagine glycan. Cys-364 and Cys-370 form a disulfide bridge. Asn-387 carries an N-linked (GlcNAc...) asparagine glycan. An intrachain disulfide couples Cys-393 to Cys-409.

This sequence belongs to the glycosyl hydrolase 28 family. In terms of tissue distribution, pollen.

Its subcellular location is the secreted. It localises to the cell wall. The catalysed reaction is [(1-&gt;4)-alpha-D-galacturonosyl](n) + H2O = alpha-D-galacturonate + [(1-&gt;4)-alpha-D-galacturonosyl](n-1). May function in depolymerizing pectin during pollen development, germination, and tube growth. Acts as an exo-polygalacturonase. In Zea mays (Maize), this protein is Exopolygalacturonase (PG2C).